Consider the following 308-residue polypeptide: Phenylcoumaran benzylic ether reductase TP7 (308 aa).

Residues glycine 11–glycine 17, arginine 36, and lysine 45 each bind NADP(+). Residue lysine 133 is the Proton acceptor of the active site. Position 137 (arginine 137) interacts with NADP(+).

Belongs to the NmrA-type oxidoreductase family. Isoflavone reductase subfamily. Expressed in flowers. Expressed at low levels in stems.

It carries out the reaction (-)-dehydrodiconiferyl alcohol + NADPH + H(+) = (S)-isodihydrodehydrodiconiferyl alcohol + NADP(+). The enzyme catalyses (+)-dehydrodiconiferyl alcohol + NADPH + H(+) = (R)-isodihydrodehydrodiconiferyl alcohol + NADP(+). The catalysed reaction is (2R,3S)-dihydrodehydrodiconiferyl alcohol + NADPH + H(+) = (S)-tetrahydrodehydrodiconiferyl alcohol + NADP(+). It catalyses the reaction (2S,3R)-dihydrodehydrodiconiferyl alcohol + NADPH + H(+) = (R)-tetrahydrodehydrodiconiferyl alcohol + NADP(+). Oxidoreductase involved in lignan biosynthesis. Catalyzes the NADPH-dependent reduction of phenylcoumaran benzylic ethers. Converts dehydrodiconiferyl alcohol (DDC) to isodihydrodehydrodiconiferyl alcohol (IDDDC), and dihydrodehydrodiconiferyl alcohol (DDDC) to tetrahydrodehydrodiconiferyl alcohol (TDDC). This is Phenylcoumaran benzylic ether reductase TP7 from Nicotiana tabacum (Common tobacco).